A 436-amino-acid chain; its full sequence is 5-hydroxytryptamine receptor 6 (436 aa).

Residues 1–27 (MVPEPGPVNSSTPAWGPGPPPAPGGSG) are Extracellular-facing. Asparagine 9 carries N-linked (GlcNAc...) asparagine glycosylation. A helical membrane pass occupies residues 28 to 52 (WVAAALCVVIVLTAAANSLLIVLIC). At 53 to 62 (TQPALRNTSN) the chain is on the cytoplasmic side. A helical membrane pass occupies residues 63–88 (FFLVSLFTSDLMVGLVVMPPAMLNAL). The Extracellular segment spans residues 89-96 (YGRWVLAR). Residues 97 to 122 (GLCLLWTAFDVMCCSASILNLCLISL) form a helical membrane-spanning segment. Residues cysteine 99 and cysteine 180 are joined by a disulfide bond. Aspartate 106 contributes to the serotonin binding site. The Cytoplasmic portion of the chain corresponds to 123–142 (DRYLLILSPLRYKLRMTAPR). Residues 143–167 (ALALILGAWSLAALASFLPLLLGWH) traverse the membrane as a helical segment. The Extracellular segment spans residues 168 to 185 (ELGKARTPAPGQCRLLAS). A helical membrane pass occupies residues 186-209 (LPFVLVASGVTFFLPSGAICFTYC). At 210-266 (RILLAARKQAVQVASLTTGTAGQALETLQVPRTPRPGMESADSRRLATKHSRKALKA) the chain is on the cytoplasmic side. Residues 267-293 (SLTLGILLGMFFVTWLPFFVANIAQAV) form a helical membrane-spanning segment. Serotonin is bound at residue asparagine 288. The Extracellular segment spans residues 294–299 (CDCISP). The helical transmembrane segment at 300-323 (GLFDVLTWLGYCNSTMNPIIYPLF) threads the bilayer. Topologically, residues 324 to 436 (MRDFKRALGR…RYGRIHSVPP (113 aa)) are cytoplasmic.

The protein belongs to the G-protein coupled receptor 1 family. In terms of assembly, interacts with MTOR, RPTOR and NF1. Interacts with CDK5. In terms of tissue distribution, localized exclusively in the central nervous system, predominantly in the corpus striatum but also in various limbic and cortical regions.

It is found in the cell membrane. Functionally, G-protein coupled receptor for 5-hydroxytryptamine (serotonin), a biogenic hormone that functions as a neurotransmitter, a hormone and a mitogen. Also has a high affinity for tricyclic psychotropic drugs. Ligand binding causes a conformation change that triggers signaling via guanine nucleotide-binding proteins (G proteins) and modulates the activity of downstream effectors. HTR6 is coupled to G(s) G alpha proteins and mediates activation of adenylate cyclase activity. Controls pyramidal neurons migration during corticogenesis, through the regulation of CDK5 activity. Is an activator of mTOR signaling. This is 5-hydroxytryptamine receptor 6 (Htr6) from Rattus norvegicus (Rat).